A 201-amino-acid polypeptide reads, in one-letter code: Syndecan-2 (201 aa).

Positions 1–18 are cleaved as a signal peptide; the sequence is MRRAWILLTLGLVACVSA. The Extracellular portion of the chain corresponds to 19–144; that stretch reads ESRAELTSDK…HSDSLFKRTE (126 aa). O-linked (Xyl...) (glycosaminoglycan) serine glycosylation is found at S41, S55, and S57. Disordered stretches follow at residues 42–70 and 90–130; these read GVYPIDDDDYASASGSGADEDVESPELTT and TLNI…DTNV. Polar residues predominate over residues 90–102; sequence TLNIQNKIPAQTK. T101 carries O-linked (GalNAc...) threonine glycosylation. The span at 103-123 shows a compositional bias: basic and acidic residues; the sequence is SPEETDKEKVHLSDSERKMDP. Residue S115 is modified to Phosphoserine; by FAM20C. A helical transmembrane segment spans residues 145 to 169; it reads VLAAVIAGGVIGFLFAIFLILLLVY. At 170 to 201 the chain is on the cytoplasmic side; it reads RMRKKDEGSYDLGERKPSSAAYQKAPTKEFYA. A disordered region spans residues 178–201; the sequence is SYDLGERKPSSAAYQKAPTKEFYA. The residue at position 187 (S187) is a Phosphoserine.

This sequence belongs to the syndecan proteoglycan family. Interacts (via cytoplasmic domain) with SARM1. Forms a complex with SDCBP and PDCD6IP. O-glycosylated with core 1 or possibly core 8 glycans. Contains heparan sulfate. Also contains chondroitin sulfate.

Its subcellular location is the membrane. Cell surface proteoglycan which regulates dendritic arbor morphogenesis. The chain is Syndecan-2 (SDC2) from Homo sapiens (Human).